A 262-amino-acid chain; its full sequence is Hydroxyethylthiazole kinase (262 aa).

Methionine 50 provides a ligand contact to substrate. Residues arginine 125 and threonine 171 each coordinate ATP. Glycine 198 provides a ligand contact to substrate.

The protein belongs to the Thz kinase family. Mg(2+) serves as cofactor.

It catalyses the reaction 5-(2-hydroxyethyl)-4-methylthiazole + ATP = 4-methyl-5-(2-phosphooxyethyl)-thiazole + ADP + H(+). The protein operates within cofactor biosynthesis; thiamine diphosphate biosynthesis; 4-methyl-5-(2-phosphoethyl)-thiazole from 5-(2-hydroxyethyl)-4-methylthiazole: step 1/1. Functionally, catalyzes the phosphorylation of the hydroxyl group of 4-methyl-5-beta-hydroxyethylthiazole (THZ). The protein is Hydroxyethylthiazole kinase of Citrobacter koseri (strain ATCC BAA-895 / CDC 4225-83 / SGSC4696).